Reading from the N-terminus, the 179-residue chain is Large ribosomal subunit protein uL5 (179 aa).

It belongs to the universal ribosomal protein uL5 family. Part of the 50S ribosomal subunit; part of the 5S rRNA/L5/L18/L25 subcomplex. Contacts the 5S rRNA and the P site tRNA. Forms a bridge to the 30S subunit in the 70S ribosome.

This is one of the proteins that bind and probably mediate the attachment of the 5S RNA into the large ribosomal subunit, where it forms part of the central protuberance. In the 70S ribosome it contacts protein S13 of the 30S subunit (bridge B1b), connecting the 2 subunits; this bridge is implicated in subunit movement. Contacts the P site tRNA; the 5S rRNA and some of its associated proteins might help stabilize positioning of ribosome-bound tRNAs. The sequence is that of Large ribosomal subunit protein uL5 from Nitrosospira multiformis (strain ATCC 25196 / NCIMB 11849 / C 71).